A 510-amino-acid polypeptide reads, in one-letter code: NAD(P)H-quinone oxidoreductase subunit 2 A, chloroplastic (510 aa).

13 helical membrane-spanning segments follow: residues 24–44 (LLLF…GLIL), 57–77 (IPWL…ALLF), 99–119 (IFQF…VEYI), 124–144 (MAIT…MFLC), 149–169 (LITI…LSGY), 183–203 (YLLM…WLYG), 227–247 (PGIS…LSPA), 295–315 (WHLL…LIAI), 323–343 (MLAY…IVGD), 347–367 (GYAS…GTFA), 395–415 (ALSS…AGFF), 418–438 (LHLF…IGLL), and 484–504 (MIVC…IIAI).

Belongs to the complex I subunit 2 family. In terms of assembly, NDH is composed of at least 16 different subunits, 5 of which are encoded in the nucleus.

Its subcellular location is the plastid. It is found in the chloroplast thylakoid membrane. It carries out the reaction a plastoquinone + NADH + (n+1) H(+)(in) = a plastoquinol + NAD(+) + n H(+)(out). The catalysed reaction is a plastoquinone + NADPH + (n+1) H(+)(in) = a plastoquinol + NADP(+) + n H(+)(out). In terms of biological role, NDH shuttles electrons from NAD(P)H:plastoquinone, via FMN and iron-sulfur (Fe-S) centers, to quinones in the photosynthetic chain and possibly in a chloroplast respiratory chain. The immediate electron acceptor for the enzyme in this species is believed to be plastoquinone. Couples the redox reaction to proton translocation, and thus conserves the redox energy in a proton gradient. In Platanus occidentalis (Sycamore), this protein is NAD(P)H-quinone oxidoreductase subunit 2 A, chloroplastic.